Here is a 1374-residue protein sequence, read N- to C-terminus: DNA-directed RNA polymerase subunit beta (1374 aa).

It belongs to the RNA polymerase beta chain family. In terms of assembly, the RNAP catalytic core consists of 2 alpha, 1 beta, 1 beta' and 1 omega subunit. When a sigma factor is associated with the core the holoenzyme is formed, which can initiate transcription.

The catalysed reaction is RNA(n) + a ribonucleoside 5'-triphosphate = RNA(n+1) + diphosphate. Its function is as follows. DNA-dependent RNA polymerase catalyzes the transcription of DNA into RNA using the four ribonucleoside triphosphates as substrates. The polypeptide is DNA-directed RNA polymerase subunit beta (Paracidovorax citrulli (strain AAC00-1) (Acidovorax citrulli)).